Here is a 206-residue protein sequence, read N- to C-terminus: MESQAATPSSLSGESCTLDLPAVCDTSSYEASQRVSQGSSNSLSSLESHPFLSSSTTDPDSNSLNTEQKGSWDSENFWLDPSSKGQLETNEEEDGLRKSLDRFYEAFAHPLPGSGDPLSASVCQCLSQTISELEGQESQRYALRSFQMAQVIFSRDGCSILQRHSRDTRFYPLEQEGSSVDDEEPTPGLSREVIRFLLEQTVMKDS.

The tract at residues Ser27–Asp94 is disordered. A compositionally biased stretch (low complexity) spans Ser32 to Ser55. Residues Thr56–Ser74 are compositionally biased toward polar residues.

In terms of assembly, component of the shieldin complex, consisting of SHLD1, SHLD2, SHLD3 and MAD2L2/REV7. Within the complex, SHLD2 forms a scaffold which interacts with a SHLD3-MAD2L2 subcomplex via its N-terminus, and with SHLD1 via its C-terminus. Interacts with ASTE1.

Its subcellular location is the chromosome. Component of the shieldin complex, which plays an important role in repair of DNA double-stranded breaks (DSBs). During G1 and S phase of the cell cycle, the complex functions downstream of TP53BP1 to promote non-homologous end joining (NHEJ) and suppress DNA end resection. Mediates various NHEJ-dependent processes including immunoglobulin class-switch recombination, and fusion of unprotected telomeres. This is Shieldin complex subunit 1 from Mus musculus (Mouse).